The primary structure comprises 195 residues: 22.0 kDa heat shock protein (195 aa).

An N-terminal signal peptide occupies residues 1-21 (MMKHLLSIFFIGALLLGNIKT). The region spanning 62-180 (RDTSVALSPA…GPRVVNIAAE (119 aa)) is the sHSP domain. N-linked (GlcNAc...) asparagine glycosylation is present at asparagine 160.

The protein belongs to the small heat shock protein (HSP20) family. In terms of assembly, may form oligomeric structures.

It is found in the endoplasmic reticulum. In Arabidopsis thaliana (Mouse-ear cress), this protein is 22.0 kDa heat shock protein (HSP22.0).